The sequence spans 435 residues: F-box only protein 9 (435 aa).

The disordered stretch occupies residues Met1 to Glu25. Positions Asp7 to Glu25 are enriched in basic and acidic residues. The TPR repeat unit spans residues Ala82–Ile115. At Ser124 the chain carries Phosphoserine. Residues Gln173 to Ala224 form the F-box domain.

Part of the SCF (SKP1-CUL1-F-box) E3 ubiquitin-protein ligase complex SCF(FBXO9) composed of CUL1, SKP1, RBX1 and FBXO9. Interacts with TTI1 and TELO2; when TTI1 and TELO2 are phosphorylated by CK2.

The protein resides in the cytoplasm. Its pathway is protein modification; protein ubiquitination. Substrate recognition component of a SCF (SKP1-CUL1-F-box protein) E3 ubiquitin-protein ligase complex which mediates the ubiquitination and subsequent proteasomal degradation of target proteins and plays a role in several biological processes such as cell cycle, cell proliferation, or maintenance of chromosome stability. Ubiquitinates mTORC1-bound TTI1 and TELO2 when they are phosphorylated by CK2 following growth factor deprivation, leading to their degradation. In contrast, does not mediate ubiquitination of TTI1 and TELO2 when they are part of the mTORC2 complex. As a consequence, mTORC1 is inactivated to restrain cell growth and protein translation, while mTORC2 is the activated due to the relief of feedback inhibition by mTORC1. Plays a role in maintaining epithelial cell survival by regulating the turn-over of chromatin modulator PRMT4 through ubiquitination and degradation by the proteasomal pathway. Also regulates PPARgamma stability by facilitating PPARgamma/PPARG ubiquitination and thereby plays a role in adipocyte differentiation. The chain is F-box only protein 9 (Fbxo9) from Rattus norvegicus (Rat).